Consider the following 459-residue polypeptide: UDP-N-acetylglucosamine 1-carboxyvinyltransferase (459 aa).

40–41 is a phosphoenolpyruvate binding site; sequence KN. R111 contacts UDP-N-acetyl-alpha-D-glucosamine. Residue C135 is the Proton donor of the active site. Residue C135 is modified to 2-(S-cysteinyl)pyruvic acid O-phosphothioketal. UDP-N-acetyl-alpha-D-glucosamine is bound by residues 140-144, D324, and V346; that span reads RPVDL. A disordered region spans residues 437-459; it reads PSAPPSEVSSAVAAGPDAAAAPV. The span at 441–459 shows a compositional bias: low complexity; that stretch reads PSEVSSAVAAGPDAAAAPV.

Belongs to the EPSP synthase family. MurA subfamily.

The protein localises to the cytoplasm. It carries out the reaction phosphoenolpyruvate + UDP-N-acetyl-alpha-D-glucosamine = UDP-N-acetyl-3-O-(1-carboxyvinyl)-alpha-D-glucosamine + phosphate. The protein operates within cell wall biogenesis; peptidoglycan biosynthesis. Functionally, cell wall formation. Adds enolpyruvyl to UDP-N-acetylglucosamine. In Gloeobacter violaceus (strain ATCC 29082 / PCC 7421), this protein is UDP-N-acetylglucosamine 1-carboxyvinyltransferase.